We begin with the raw amino-acid sequence, 165 residues long: Nucleotide-binding protein P9515_05441 (165 aa).

It belongs to the YajQ family.

Nucleotide-binding protein. The polypeptide is Nucleotide-binding protein P9515_05441 (Prochlorococcus marinus (strain MIT 9515)).